A 388-amino-acid chain; its full sequence is Chorismate synthase (388 aa).

The NADP(+) site is built by Arg39 and Arg45. The segment at 95 to 118 (EKNEKSRRVSRPRPGHADLVGGMK) is disordered. FMN is bound by residues 130-132 (RSS), 251-252 (NA), Gly296, 311-315 (KPIPT), and Arg337.

The protein belongs to the chorismate synthase family. As to quaternary structure, homotetramer. Requires FMNH2 as cofactor.

The catalysed reaction is 5-O-(1-carboxyvinyl)-3-phosphoshikimate = chorismate + phosphate. It functions in the pathway metabolic intermediate biosynthesis; chorismate biosynthesis; chorismate from D-erythrose 4-phosphate and phosphoenolpyruvate: step 7/7. Functionally, catalyzes the anti-1,4-elimination of the C-3 phosphate and the C-6 proR hydrogen from 5-enolpyruvylshikimate-3-phosphate (EPSP) to yield chorismate, which is the branch point compound that serves as the starting substrate for the three terminal pathways of aromatic amino acid biosynthesis. This reaction introduces a second double bond into the aromatic ring system. The chain is Chorismate synthase from Listeria monocytogenes serotype 4b (strain CLIP80459).